The primary structure comprises 302 residues: MIEVQTTSQLQEQLQDAREQGKTIGFVPTMGALHGGHQSLVRACAQTCDLVVVSIYVNPLQFGPHEDYHEYPRQLEKDRVLAEEAGCDVLFCPTDEEIYPDGYTQTVHVKQGANVLCGKSRPGHFDGVATVVLKLFMLVQPDFAFFGEKDAQQVAIIKQLVKEFFLPVTIVACPTVREDDGLAKSSRNANLTPAERQVAPKLYAALRDAAKSPTSQLSDLVQQVRQHLAALPLGCIDYVEAYEYPSLKKVEQSDGIVILALAYQFSKARLIDHILIDMNNRNGGLNDVSDNDESKIASCTGD.

ATP is bound at residue 30 to 37 (MGALHGGH). Residue histidine 37 is the Proton donor of the active site. (R)-pantoate is bound at residue glutamine 61. Glutamine 61 is a binding site for beta-alanine. 147 to 150 (GEKD) serves as a coordination point for ATP. Glutamine 153 lines the (R)-pantoate pocket. ATP contacts are provided by residues valine 176 and 184–187 (KSSR).

Belongs to the pantothenate synthetase family. In terms of assembly, homodimer.

The protein resides in the cytoplasm. The catalysed reaction is (R)-pantoate + beta-alanine + ATP = (R)-pantothenate + AMP + diphosphate + H(+). It functions in the pathway cofactor biosynthesis; (R)-pantothenate biosynthesis; (R)-pantothenate from (R)-pantoate and beta-alanine: step 1/1. Catalyzes the condensation of pantoate with beta-alanine in an ATP-dependent reaction via a pantoyl-adenylate intermediate. The chain is Pantothenate synthetase from Shouchella clausii (strain KSM-K16) (Alkalihalobacillus clausii).